A 407-amino-acid chain; its full sequence is uncharacterized protein (407 aa).

This is an uncharacterized protein from Mycobacterium tuberculosis (strain CDC 1551 / Oshkosh).